Consider the following 501-residue polypeptide: Pyruvate kinase 1 (501 aa).

Arginine 50 contributes to the substrate binding site. Residues asparagine 52, serine 54, aspartate 85, and threonine 86 each contribute to the K(+) site. Position 52-55 (52-55 (NFSH)) interacts with ATP. ATP is bound by residues arginine 92 and lysine 178. Glutamate 243 is a binding site for Mg(2+). Glycine 266, aspartate 267, and threonine 299 together coordinate substrate. A Mg(2+)-binding site is contributed by aspartate 267.

This sequence belongs to the pyruvate kinase family. As to quaternary structure, homotetramer. It depends on Mg(2+) as a cofactor. Requires K(+) as cofactor.

The catalysed reaction is pyruvate + ATP = phosphoenolpyruvate + ADP + H(+). It participates in carbohydrate degradation; glycolysis; pyruvate from D-glyceraldehyde 3-phosphate: step 5/5. The sequence is that of Pyruvate kinase 1 (PYK1) from Candida glabrata (strain ATCC 2001 / BCRC 20586 / JCM 3761 / NBRC 0622 / NRRL Y-65 / CBS 138) (Yeast).